Here is a 24-residue protein sequence, read N- to C-terminus: Cytochrome c3-2 (24 aa).

Residues 1 to 24 are disordered; that stretch reads GNAPAADMVLKAPGDAKMTKTAVP.

In terms of processing, binds 4 heme groups per subunit.

The protein resides in the periplasm. Participates in sulfate respiration coupled with phosphorylation by transferring electrons from the enzyme dehydrogenase to ferredoxin. In Nitratidesulfovibrio vulgaris (Desulfovibrio vulgaris), this protein is Cytochrome c3-2.